A 428-amino-acid polypeptide reads, in one-letter code: Dihydroorotase (428 aa).

2 residues coordinate Zn(2+): His59 and His61. Substrate is bound by residues 61-63 (HLR) and Asn93. Asp151, His178, and His231 together coordinate Zn(2+). Asn277 is a binding site for substrate. Asp304 is a binding site for Zn(2+). Residue Asp304 is part of the active site. Residues His308 and 322 to 323 (FG) each bind substrate.

This sequence belongs to the metallo-dependent hydrolases superfamily. DHOase family. Class I DHOase subfamily. Zn(2+) is required as a cofactor.

The enzyme catalyses (S)-dihydroorotate + H2O = N-carbamoyl-L-aspartate + H(+). Its pathway is pyrimidine metabolism; UMP biosynthesis via de novo pathway; (S)-dihydroorotate from bicarbonate: step 3/3. Catalyzes the reversible cyclization of carbamoyl aspartate to dihydroorotate. In Halalkalibacterium halodurans (strain ATCC BAA-125 / DSM 18197 / FERM 7344 / JCM 9153 / C-125) (Bacillus halodurans), this protein is Dihydroorotase.